The following is a 134-amino-acid chain: Small ribosomal subunit protein uS11 (134 aa).

This sequence belongs to the universal ribosomal protein uS11 family. In terms of assembly, part of the 30S ribosomal subunit. Interacts with proteins S7 and S18. Binds to IF-3.

Functionally, located on the platform of the 30S subunit, it bridges several disparate RNA helices of the 16S rRNA. Forms part of the Shine-Dalgarno cleft in the 70S ribosome. The chain is Small ribosomal subunit protein uS11 from Herminiimonas arsenicoxydans.